The primary structure comprises 565 residues: Probable alpha-L-arabinofuranosidase A (565 aa).

An N-terminal signal peptide occupies residues 1 to 19 (MPLSAAIKSSLSVSVRADA). N-linked (GlcNAc...) asparagine glycosylation is found at asparagine 71, asparagine 91, asparagine 128, asparagine 303, asparagine 362, asparagine 486, and asparagine 501.

Belongs to the glycosyl hydrolase 51 family.

The protein resides in the secreted. The catalysed reaction is Hydrolysis of terminal non-reducing alpha-L-arabinofuranoside residues in alpha-L-arabinosides.. The protein operates within glycan metabolism; L-arabinan degradation. Its function is as follows. Alpha-L-arabinofuranosidase involved in the degradation of arabinoxylan, a major component of plant hemicellulose. Acts only on small linear 1,5-alpha-linked L-arabinofuranosyl oligosaccharides. This is Probable alpha-L-arabinofuranosidase A (abfA) from Emericella nidulans (strain FGSC A4 / ATCC 38163 / CBS 112.46 / NRRL 194 / M139) (Aspergillus nidulans).